The sequence spans 78 residues: Putative defensin-like protein 133 (78 aa).

The first 24 residues, 1–24 (MKRSFLLLLTILTIFIILGQGVMG), serve as a signal peptide directing secretion. Intrachain disulfides connect C34-C75, C44-C68, C49-C72, and C53-C74.

This sequence belongs to the DEFL family.

The protein localises to the secreted. This is Putative defensin-like protein 133 (LCR33) from Arabidopsis thaliana (Mouse-ear cress).